The chain runs to 333 residues: Secreted mono- and diacylglycerol lipase 1 (333 aa).

The signal sequence occupies residues 1-16 (MMLILSILSIIAFAAA). Disulfide bonds link C56–C268 and C276–C298. Residue S176 is the Nucleophile of the active site. Catalysis depends on residues D230 and H288.

It belongs to the AB hydrolase superfamily. Lipase family. Class 3 subfamily.

It is found in the secreted. It catalyses the reaction a monoacylglycerol + H2O = glycerol + a fatty acid + H(+). The catalysed reaction is a diacylglycerol + H2O = a monoacylglycerol + a fatty acid + H(+). In terms of biological role, secreted mono- and diacylglycerol lipase that allows the use of hydrolyzed lipids as carbon source and might play a role in pathogenicity. Shows lipolytic activity towards olive oil and p-nitrophenylpalmitate. The chain is Secreted mono- and diacylglycerol lipase 1 from Fusarium solani (Filamentous fungus).